Here is a 497-residue protein sequence, read N- to C-terminus: PHD finger protein 10 (497 aa).

The tract at residues 1–61 is disordered; that stretch reads MAAAGPGAAL…SSRSCETSSQ (61 aa). Residues Ser-11, Ser-35, and Ser-49 each carry the phosphoserine modification. Residues 88–184 form an essential to induce neural progenitor proliferation region; that stretch reads MLQEQVSEYL…HYKEYSQMQQ (97 aa). Residues 88 to 294 are SAY; that stretch reads MLQEQVSEYL…PPLDPELPAL (207 aa). A Glycyl lysine isopeptide (Lys-Gly) (interchain with G-Cter in SUMO2) cross-link involves residue Lys-240. The residue at position 269 (Ser-269) is a Phosphoserine. Positions 284 to 295 are enriched in low complexity; it reads EPPLDPELPALD. The tract at residues 284–367 is disordered; it reads EPPLDPELPA…KRSVLSKSVP (84 aa). Positions 291–333 are essential to induce neural progenitor proliferation; that stretch reads LPALDSDGDSDDGEDGGGDEKRKNKGTSDSSSGNVSEGDSPPD. 4 positions are modified to phosphoserine: Ser-296, Ser-300, Ser-326, and Ser-330. The segment covering 296–307 has biased composition (acidic residues); sequence SDGDSDDGEDGG. Polar residues predominate over residues 317-327; it reads TSDSSSGNVSE. Over residues 344-358 the composition is skewed to basic and acidic residues; that stretch reads KSKDKMATPRKDGSK. The PHD-type 1; degenerate zinc-finger motif lies at 378-435; that stretch reads LCGICLKGKESNKKGKAESLIHCSQCDNSGHPSCLDMTMELVSMIKTYPWQCMECKTC. A Glycyl lysine isopeptide (Lys-Gly) (interchain with G-Cter in SUMO2) cross-link involves residue Lys-384. The PHD-type 2; degenerate zinc-finger motif lies at 437–480; the sequence is ICGQPHHEEEMMFCDVCDRGYHTFCVGLGAIPSGRWICDCCQRA.

Belongs to the SAYP family. In terms of assembly, component of neural progenitors-specific chromatin remodeling complex (npBAF complex) composed of at least, ARID1A/BAF250A or ARID1B/BAF250B, SMARCD1/BAF60A, SMARCD3/BAF60C, SMARCA2/BRM/BAF190B, SMARCA4/BRG1/BAF190A, SMARCB1/BAF47, SMARCC1/BAF155, SMARCE1/BAF57, SMARCC2/BAF170, PHF10/BAF45A, ACTL6A/BAF53A and actin. Interacts with ACTL6A/BAF53A, SMARCA2/BRM/BAF190B, SMARCA4/BRG1/BAF190A and PBRM1/BAF180.

Its subcellular location is the nucleus. In terms of biological role, involved in transcription activity regulation by chromatin remodeling. Belongs to the neural progenitors-specific chromatin remodeling complex (npBAF complex) and is required for the proliferation of neural progenitors. During neural development a switch from a stem/progenitor to a post-mitotic chromatin remodeling mechanism occurs as neurons exit the cell cycle and become committed to their adult state. The transition from proliferating neural stem/progenitor cells to post-mitotic neurons requires a switch in subunit composition of the npBAF and nBAF complexes. As neural progenitors exit mitosis and differentiate into neurons, npBAF complexes which contain ACTL6A/BAF53A and PHF10/BAF45A, are exchanged for homologous alternative ACTL6B/BAF53B and DPF1/BAF45B or DPF3/BAF45C subunits in neuron-specific complexes (nBAF). The npBAF complex is essential for the self-renewal/proliferative capacity of the multipotent neural stem cells. The nBAF complex along with CREST plays a role regulating the activity of genes essential for dendrite growth. This is PHD finger protein 10 (Phf10) from Rattus norvegicus (Rat).